The sequence spans 337 residues: Cysteine proteinase 3 (337 aa).

The first 21 residues, 1–21 (MRLSITLIFTLIVLSISFISA), serve as a signal peptide directing secretion. Residues 22–120 (GNVFSHKQYQ…GLRLNRPQFK (99 aa)) constitute a propeptide, activation peptide. 3 disulfides stabilise this stretch: Cys-142–Cys-185, Cys-176–Cys-219, and Cys-277–Cys-326. Cys-145 is a catalytic residue. Residues His-284 and Asn-304 contribute to the active site.

Belongs to the peptidase C1 family.

Its subcellular location is the lysosome. This chain is Cysteine proteinase 3 (cprC), found in Dictyostelium discoideum (Social amoeba).